The chain runs to 867 residues: Heat shock 70 kDa protein 17 (867 aa).

The N-terminal stretch at 1 to 24 is a signal peptide; sequence MGKIFSWLVVLLSLISLVPVPSES. Polar residues-rich tracts occupy residues 560–575 and 587–598; these read TIDS…ATDE and DAENSTASNTTA. Disordered regions lie at residues 560-607 and 829-867; these read TIDS…ASLG and PKPK…HDEL. Positions 833-867 are enriched in basic and acidic residues; the sequence is PKIEKVTKTENTTKEEEQSKSSDEAAKEEESHDEL. The Prevents secretion from ER signature appears at 865-867; sequence DEL.

It belongs to the heat shock protein 70 (TC 1.A.33) family. HSP110/SSE subfamily.

It localises to the endoplasmic reticulum lumen. This Arabidopsis thaliana (Mouse-ear cress) protein is Heat shock 70 kDa protein 17 (HSP70-17).